Reading from the N-terminus, the 278-residue chain is Ferredoxin--NADP reductase A (278 aa).

Positions 3-103 (PGYTEETVLE…KRATGTLTIG (101 aa)) constitute an FAD-binding FR-type domain. Residues 52–55 (RAYS) and Thr118 contribute to the FAD site.

This sequence belongs to the ferredoxin--NADP reductase type 1 family. FAD is required as a cofactor.

It carries out the reaction 2 reduced [4Fe-4S]-[ferredoxin] + NADP(+) + H(+) = 2 oxidized [4Fe-4S]-[ferredoxin] + NADPH. Functionally, transports electrons between NADPH and ferredoxin. Can transfer electrons to ferredoxins Fdx2 and Fdx8. Prefers NADPH to NADH. In Sorangium cellulosum (strain So ce56) (Polyangium cellulosum (strain So ce56)), this protein is Ferredoxin--NADP reductase A.